Consider the following 194-residue polypeptide: Ion-translocating oxidoreductase complex subunit A (194 aa).

Transmembrane regions (helical) follow at residues 4 to 24, 39 to 59, 71 to 91, 102 to 122, 131 to 151, and 172 to 192; these read LVLI…QFLG, IGLS…SYLV, FLRT…TEMV, VLGI…VALL, FITA…VLVL, and AIGM…AGLI.

This sequence belongs to the NqrDE/RnfAE family. As to quaternary structure, the complex is composed of six subunits: RnfA, RnfB, RnfC, RnfD, RnfE and RnfG.

The protein resides in the cell inner membrane. In terms of biological role, part of a membrane-bound complex that couples electron transfer with translocation of ions across the membrane. This Ectopseudomonas mendocina (strain ymp) (Pseudomonas mendocina) protein is Ion-translocating oxidoreductase complex subunit A.